The chain runs to 372 residues: GTPase Obg (372 aa).

One can recognise an Obg domain in the interval 1 to 159 (MKFIDEARIE…RMLKLELKVL (159 aa)). The disordered stretch occupies residues 128-147 (LHFKSSTNRAPRQKTDGKPG). The region spanning 160 to 334 (ADVGLLGMPN…LVYAIYDYLA (175 aa)) is the OBG-type G domain. Residues 166–173 (GMPNAGKS), 191–195 (FTTLA), 213–216 (DIPG), 284–287 (NKLD), and 315–317 (SAL) contribute to the GTP site. 2 residues coordinate Mg(2+): serine 173 and threonine 193.

This sequence belongs to the TRAFAC class OBG-HflX-like GTPase superfamily. OBG GTPase family. Monomer. Mg(2+) is required as a cofactor.

It is found in the cytoplasm. Functionally, an essential GTPase which binds GTP, GDP and possibly (p)ppGpp with moderate affinity, with high nucleotide exchange rates and a fairly low GTP hydrolysis rate. Plays a role in control of the cell cycle, stress response, ribosome biogenesis and in those bacteria that undergo differentiation, in morphogenesis control. This is GTPase Obg from Burkholderia thailandensis (strain ATCC 700388 / DSM 13276 / CCUG 48851 / CIP 106301 / E264).